The primary structure comprises 370 residues: Putative methylthioribose-1-phosphate isomerase (370 aa).

Substrate-binding positions include 66–68 (RGA), Arg-109, and Gln-217. The Proton donor role is filled by Asp-258. 268-269 (NK) lines the substrate pocket.

This sequence belongs to the eIF-2B alpha/beta/delta subunits family. MtnA subfamily.

It carries out the reaction 5-(methylsulfanyl)-alpha-D-ribose 1-phosphate = 5-(methylsulfanyl)-D-ribulose 1-phosphate. Its function is as follows. Catalyzes the interconversion of methylthioribose-1-phosphate (MTR-1-P) into methylthioribulose-1-phosphate (MTRu-1-P). The sequence is that of Putative methylthioribose-1-phosphate isomerase from Aeropyrum pernix (strain ATCC 700893 / DSM 11879 / JCM 9820 / NBRC 100138 / K1).